The sequence spans 186 residues: Sec-independent protein translocase protein TatB (186 aa).

Residues 1–21 (MFDIGFSELILLMVLGLVVLG) form a helical membrane-spanning segment. The segment at 120-186 (NAEKSQNAIS…SKSQSSKTKS (67 aa)) is disordered. Residues 177–186 (SKSQSSKTKS) are compositionally biased toward polar residues.

The protein belongs to the TatB family. In terms of assembly, the Tat system comprises two distinct complexes: a TatABC complex, containing multiple copies of TatA, TatB and TatC subunits, and a separate TatA complex, containing only TatA subunits. Substrates initially bind to the TatABC complex, which probably triggers association of the separate TatA complex to form the active translocon.

Its subcellular location is the cell inner membrane. Functionally, part of the twin-arginine translocation (Tat) system that transports large folded proteins containing a characteristic twin-arginine motif in their signal peptide across membranes. Together with TatC, TatB is part of a receptor directly interacting with Tat signal peptides. TatB may form an oligomeric binding site that transiently accommodates folded Tat precursor proteins before their translocation. The polypeptide is Sec-independent protein translocase protein TatB (Haemophilus influenzae (strain ATCC 51907 / DSM 11121 / KW20 / Rd)).